The sequence spans 379 residues: Cytochrome b (379 aa).

4 consecutive transmembrane segments (helical) span residues 34–54 (LGSL…FLTM), 78–99 (WLIR…YLHV), 114–134 (WMTG…GYVL), and 179–199 (FYTF…IHLF). Residues H84 and H98 each coordinate heme b. The heme b site is built by H183 and H197. H202 serves as a coordination point for a ubiquinone. 4 helical membrane-spanning segments follow: residues 227-247 (YKDM…CLID), 289-309 (LGGV…PFYN), 321-341 (MNQI…WIGK), and 348-368 (YIMT…FNVH).

This sequence belongs to the cytochrome b family. In terms of assembly, the main subunits of complex b-c1 are: cytochrome b, cytochrome c1 and the Rieske protein. Requires heme b as cofactor.

Its subcellular location is the mitochondrion inner membrane. Functionally, component of the ubiquinol-cytochrome c reductase complex (complex III or cytochrome b-c1 complex) that is part of the mitochondrial respiratory chain. The b-c1 complex mediates electron transfer from ubiquinol to cytochrome c. Contributes to the generation of a proton gradient across the mitochondrial membrane that is then used for ATP synthesis. The sequence is that of Cytochrome b (MT-CYB) from Locusta migratoria (Migratory locust).